The primary structure comprises 64 residues: MAKVSSSLLKFAIVLILVLSMSAIISAKCIKNGKGCREDQGPPFCCSGFCYRQVGWARGYCKNR.

The signal sequence occupies residues 1-26; sequence MAKVSSSLLKFAIVLILVLSMSAIIS. 3 disulfides stabilise this stretch: cysteine 29–cysteine 46, cysteine 36–cysteine 50, and cysteine 45–cysteine 61.

The protein belongs to the AMP family.

It is found in the secreted. Its function is as follows. Possesses antifungal and antibacterial activity. The chain is Antimicrobial peptide 1 from Mesembryanthemum crystallinum (Common ice plant).